Consider the following 396-residue polypeptide: Orotidine 5'-phosphate decarboxylase (396 aa).

Residues Asp46, 68 to 70 (KTH), 103 to 112 (DRKFVDIGST), Tyr346, and Arg365 contribute to the substrate site. The active-site Proton donor is Lys105.

Belongs to the OMP decarboxylase family.

It carries out the reaction orotidine 5'-phosphate + H(+) = UMP + CO2. Its pathway is pyrimidine metabolism; UMP biosynthesis via de novo pathway; UMP from orotate: step 2/2. The chain is Orotidine 5'-phosphate decarboxylase (URA3) from Sordaria macrospora (strain ATCC MYA-333 / DSM 997 / K(L3346) / K-hell).